Consider the following 477-residue polypeptide: Maternal protein exuperantia-2 (477 aa).

The segment covering 196–209 has biased composition (basic and acidic residues); the sequence is KDGNSTKEDEHENP. Disordered stretches follow at residues 196–226 and 384–477; these read KDGN…NQKQ and TIKP…FADI. The segment covering 385-402 has biased composition (basic residues); it reads IKPRCKRSGNGTRRRNRA.

Functionally, ensures the proper localization of the mRNA of the bicoid gene to the anterior regions of the oocyte thus playing a fundamental role in the establishment of the polarity of the oocyte. May bind the bcd mRNA. The polypeptide is Maternal protein exuperantia-2 (exu2) (Drosophila pseudoobscura pseudoobscura (Fruit fly)).